We begin with the raw amino-acid sequence, 104 residues long: L-rhamnose mutarotase (104 aa).

Residue Tyr18 participates in substrate binding. Catalysis depends on His22, which acts as the Proton donor. Substrate contacts are provided by residues Tyr41 and 76–77 (WW).

Belongs to the rhamnose mutarotase family. As to quaternary structure, homodimer.

The protein localises to the cytoplasm. It carries out the reaction alpha-L-rhamnose = beta-L-rhamnose. The protein operates within carbohydrate metabolism; L-rhamnose metabolism. Functionally, involved in the anomeric conversion of L-rhamnose. This is L-rhamnose mutarotase from Mannheimia succiniciproducens (strain KCTC 0769BP / MBEL55E).